Reading from the N-terminus, the 353-residue chain is Photosystem II protein D1 (353 aa).

An N-acetylthreonine modification is found at T2. Residue T2 is modified to Phosphothreonine. Transmembrane regions (helical) follow at residues 29-46 (YIGW…TATS), 118-133 (HFLL…EWEL), and 142-156 (WIAV…AATA). H118 serves as a coordination point for chlorophyll a. Y126 serves as a coordination point for pheophytin a. D170 and E189 together coordinate [CaMn4O5] cluster. The helical transmembrane segment at 197–218 (FHMLGVAGVFGGSLFSAMHGSL) threads the bilayer. H198 provides a ligand contact to chlorophyll a. A quinone is bound by residues H215 and 264–265 (SF). H215 is a binding site for Fe cation. H272 serves as a coordination point for Fe cation. A helical membrane pass occupies residues 274–288 (FLAAWPVVGIWFTAL). H332, E333, D342, and A344 together coordinate [CaMn4O5] cluster. The propeptide occupies 345–353 (VVEAPSTNG).

It belongs to the reaction center PufL/M/PsbA/D family. As to quaternary structure, PSII is composed of 1 copy each of membrane proteins PsbA, PsbB, PsbC, PsbD, PsbE, PsbF, PsbH, PsbI, PsbJ, PsbK, PsbL, PsbM, PsbT, PsbX, PsbY, PsbZ, Psb30/Ycf12, at least 3 peripheral proteins of the oxygen-evolving complex and a large number of cofactors. It forms dimeric complexes. The cofactor is The D1/D2 heterodimer binds P680, chlorophylls that are the primary electron donor of PSII, and subsequent electron acceptors. It shares a non-heme iron and each subunit binds pheophytin, quinone, additional chlorophylls, carotenoids and lipids. D1 provides most of the ligands for the Mn4-Ca-O5 cluster of the oxygen-evolving complex (OEC). There is also a Cl(-1) ion associated with D1 and D2, which is required for oxygen evolution. The PSII complex binds additional chlorophylls, carotenoids and specific lipids.. Tyr-161 forms a radical intermediate that is referred to as redox-active TyrZ, YZ or Y-Z. In terms of processing, C-terminally processed by CTPA; processing is essential to allow assembly of the oxygen-evolving complex and thus photosynthetic growth.

It localises to the plastid. It is found in the chloroplast thylakoid membrane. The catalysed reaction is 2 a plastoquinone + 4 hnu + 2 H2O = 2 a plastoquinol + O2. Its function is as follows. Photosystem II (PSII) is a light-driven water:plastoquinone oxidoreductase that uses light energy to abstract electrons from H(2)O, generating O(2) and a proton gradient subsequently used for ATP formation. It consists of a core antenna complex that captures photons, and an electron transfer chain that converts photonic excitation into a charge separation. The D1/D2 (PsbA/PsbD) reaction center heterodimer binds P680, the primary electron donor of PSII as well as several subsequent electron acceptors. This Aethionema grandiflorum (Persian stone-cress) protein is Photosystem II protein D1.